Consider the following 117-residue polypeptide: Neurotoxic enhancer CSTX-13 (117 aa).

Residues 1–20 (MKVLVIFAVLSLVIFSNCSA) form the signal peptide. Residues 21 to 47 (ETDEDFFGEESFEADDIIPFIAKEQVR) constitute a propeptide that is removed on maturation. 4 disulfides stabilise this stretch: Cys50–Cys65, Cys57–Cys74, Cys64–Cys95, and Cys76–Cys93. A propeptide spanning residues 82-87 (RSETAR) is cleaved from the precursor. At Thr116 the chain carries Threonine amide.

This sequence belongs to the neurotoxin 19 (CSTX) family. 12 subfamily. As to quaternary structure, heterodimer of A and B chains; disulfide-linked. Interacts with CSTX-1 (AC P81694) (Kd=430 nM), and with CSTX-9 (AC P58604) (Kd=370 nM). Expressed by the venom gland.

It is found in the secreted. It localises to the target cell membrane. In terms of biological role, synergistic toxin that induces or increases a cytolytic effect when combined with CSTX-1 (AC P81694) or CSTX-9 (AC P58604). When alone, has a weak insecticidal activity, with an unknown molecular target. In Cupiennius salei (American wandering spider), this protein is Neurotoxic enhancer CSTX-13.